The sequence spans 142 residues: Large ribosomal subunit protein uL11 (142 aa).

The protein belongs to the universal ribosomal protein uL11 family. In terms of assembly, part of the ribosomal stalk of the 50S ribosomal subunit. Interacts with L10 and the large rRNA to form the base of the stalk. L10 forms an elongated spine to which L12 dimers bind in a sequential fashion forming a multimeric L10(L12)X complex. One or more lysine residues are methylated.

Forms part of the ribosomal stalk which helps the ribosome interact with GTP-bound translation factors. The sequence is that of Large ribosomal subunit protein uL11 from Shewanella sp. (strain ANA-3).